The following is a 321-amino-acid chain: AA9 family lytic polysaccharide monooxygenase A (321 aa).

Positions 1-21 are cleaved as a signal peptide; that stretch reads MFRAQSFLPVLALVLRVAAHG. His-20 contributes to the Cu(2+) binding site. A disulfide bond links Cys-71 and Cys-197. Asn-72 carries N-linked (GlcNAc...) asparagine glycosylation. His-105 serves as a coordination point for Cu(2+). N-linked (GlcNAc...) asparagine glycosylation occurs at Asn-157. Residues His-183 and Gln-192 each contribute to the O2 site. Tyr-194 contacts Cu(2+). A disordered region spans residues 278 to 306; it reads SSSAAATQSSSAAPSSSAIGTSTASSAAA. A lipid anchor (GPI-anchor amidated serine) is attached at Ser-293. A propeptide spans 294–321 (removed in mature form); the sequence is SAIGTSTASSAAASGTAIVDANTCMNSA.

This sequence belongs to the polysaccharide monooxygenase AA9 family. It depends on Cu(2+) as a cofactor.

The protein localises to the cell membrane. It carries out the reaction [(1-&gt;4)-beta-D-glucosyl]n+m + reduced acceptor + O2 = 4-dehydro-beta-D-glucosyl-[(1-&gt;4)-beta-D-glucosyl]n-1 + [(1-&gt;4)-beta-D-glucosyl]m + acceptor + H2O.. Functionally, lytic polysaccharide monooxygenase (LPMO) that depolymerizes crystalline and amorphous polysaccharides via the oxidation of scissile alpha- or beta-(1-4)-glycosidic bonds, yielding C1 or C4 oxidation products. Catalysis by LPMOs requires the reduction of the active-site copper from Cu(II) to Cu(I) by a reducing agent and H(2)O(2) or O(2) as a cosubstrate. Has broad specificity, cleaving at any position along the beta-glucan backbone of xyloglucan, regardless of substitutions. Shows minor activity on glucomannan. The chain is AA9 family lytic polysaccharide monooxygenase A from Gloeophyllum trabeum (strain ATCC 11539 / FP-39264 / Madison 617) (Brown rot fungus).